The primary structure comprises 478 residues: Lysosome membrane protein 2 (478 aa).

At 1-4 (MGRC) the chain is on the cytoplasmic side. Residues 5-27 (CFYTAGTLSLLLLVTSVTLLVAR) traverse the membrane as a helical segment. The Lumenal segment spans residues 28–433 (VFQKAVDQSI…RLKSMINTTL (406 aa)). N-linked (GlcNAc...) asparagine glycans are attached at residues Asn45, Asn68, and Asn105. Residues 155–191 (IIEAMLKAYQQKLFVTHTVDELLWGYKDEILSLIHVF) form an important for interaction with GBA1 region. Residues Asn206, Asn224, Asn249, and Asn304 are each glycosylated (N-linked (GlcNAc...) asparagine). Intrachain disulfides connect Cys274–Cys329 and Cys312–Cys318. N-linked (GlcNAc...) asparagine glycosylation is found at Asn325, Asn412, and Asn430. Residues 434–459 (IITNIPYIIMALGVFFGLVFTWLACK) form a helical membrane-spanning segment. At 460 to 478 (GQGSMDEGTADERAPLIRT) the chain is on the cytoplasmic side.

It belongs to the CD36 family. As to quaternary structure, interacts with GBA1. (Microbial infection) Interacts with enterovirus 71 capsid proteins VP1 and VP2.

The protein localises to the lysosome membrane. Its function is as follows. Acts as a lysosomal receptor for glucosylceramidase (GBA1) targeting. (Microbial infection) Acts as a receptor for enterovirus 71. This chain is Lysosome membrane protein 2 (SCARB2), found in Homo sapiens (Human).